The primary structure comprises 301 residues: Cytochrome c biogenesis protein CcsA (301 aa).

The next 8 membrane-spanning stretches (helical) occupy residues 13–33 (NNIT…GLIF), 39–59 (VFYI…IILG), 73–93 (LYES…YLEY), 97–117 (LYLI…FSTL), 146–166 (MLSY…LVLI), 209–229 (TIGF…VWAN), 236–256 (WSWD…AAYL), and 270–290 (AYLA…VNFL).

It belongs to the CcmF/CycK/Ccl1/NrfE/CcsA family. In terms of assembly, may interact with Ccs1.

The protein resides in the plastid. The protein localises to the chloroplast thylakoid membrane. Its function is as follows. Required during biogenesis of c-type cytochromes (cytochrome c6 and cytochrome f) at the step of heme attachment. The chain is Cytochrome c biogenesis protein CcsA from Guillardia theta (Cryptophyte).